The primary structure comprises 202 residues: Ribonuclease HII (202 aa).

Residues 11 to 200 (GLIAGVDEVG…VRKAIEEFNR (190 aa)) form the RNase H type-2 domain. A divalent metal cation contacts are provided by Asp-17, Glu-18, and Asp-109.

Belongs to the RNase HII family. Requires Mn(2+) as cofactor. It depends on Mg(2+) as a cofactor.

The protein localises to the cytoplasm. The catalysed reaction is Endonucleolytic cleavage to 5'-phosphomonoester.. In terms of biological role, endonuclease that specifically degrades the RNA of RNA-DNA hybrids. The protein is Ribonuclease HII of Actinobacillus succinogenes (strain ATCC 55618 / DSM 22257 / CCUG 43843 / 130Z).